The following is a 472-amino-acid chain: Adenosylhomocysteinase (472 aa).

Substrate is bound by residues Thr62, Asp137, and Glu197. 198–200 (TTT) contributes to the NAD(+) binding site. Lys227 and Asp231 together coordinate substrate. NAD(+) is bound by residues Asn232, 261–266 (GYGDVG), Glu284, Asn319, 340–342 (IGH), and Asn385.

The protein belongs to the adenosylhomocysteinase family. NAD(+) is required as a cofactor.

It localises to the cytoplasm. It catalyses the reaction S-adenosyl-L-homocysteine + H2O = L-homocysteine + adenosine. It participates in amino-acid biosynthesis; L-homocysteine biosynthesis; L-homocysteine from S-adenosyl-L-homocysteine: step 1/1. May play a key role in the regulation of the intracellular concentration of adenosylhomocysteine. In Bordetella petrii (strain ATCC BAA-461 / DSM 12804 / CCUG 43448), this protein is Adenosylhomocysteinase.